Consider the following 238-residue polypeptide: 15,16-dihydrobiliverdin:ferredoxin oxidoreductase (238 aa).

This sequence belongs to the HY2 family.

The enzyme catalyses 15,16-dihydrobiliverdin + oxidized 2[4Fe-4S]-[ferredoxin] = biliverdin IXalpha + reduced 2[4Fe-4S]-[ferredoxin] + 2 H(+). Its function is as follows. Catalyzes the two-electron reduction of biliverdin IX-alpha at the C15 methine bridge. The polypeptide is 15,16-dihydrobiliverdin:ferredoxin oxidoreductase (Prochlorococcus marinus (strain NATL1A)).